The chain runs to 430 residues: Adenylosuccinate synthetase (430 aa).

GTP-binding positions include 12–18 and 40–42; these read GDEGKGK and GHT. The active-site Proton acceptor is aspartate 13. Mg(2+)-binding residues include aspartate 13 and glycine 40. IMP-binding positions include 13–16, 38–41, threonine 128, arginine 142, glutamine 223, threonine 238, and arginine 302; these read DEGK and NAGH. The active-site Proton donor is histidine 41. 298–304 is a binding site for substrate; that stretch reads TTTGRPR. Residues arginine 304, 330–332, and 412–414 each bind GTP; these read SID and SVG.

Belongs to the adenylosuccinate synthetase family. Homodimer. It depends on Mg(2+) as a cofactor.

The protein localises to the cytoplasm. It carries out the reaction IMP + L-aspartate + GTP = N(6)-(1,2-dicarboxyethyl)-AMP + GDP + phosphate + 2 H(+). It participates in purine metabolism; AMP biosynthesis via de novo pathway; AMP from IMP: step 1/2. In terms of biological role, plays an important role in the de novo pathway of purine nucleotide biosynthesis. Catalyzes the first committed step in the biosynthesis of AMP from IMP. In Streptococcus gordonii (strain Challis / ATCC 35105 / BCRC 15272 / CH1 / DL1 / V288), this protein is Adenylosuccinate synthetase.